The chain runs to 133 residues: Fluoride-specific ion channel FluC (133 aa).

Helical transmembrane passes span 12 to 32 (LAMTGGALGSGLRFAIGASLI), 41 to 61 (WGTLTVNLLGSFVAGVLLVWL), 76 to 96 (IVGVIGGLTTFSSLMMECLVF), and 104 to 124 (MIGIYLAVTLLAGLALVVAGA). Na(+) is bound by residues Gly-81 and Thr-84.

The protein belongs to the fluoride channel Fluc/FEX (TC 1.A.43) family.

Its subcellular location is the cell inner membrane. The enzyme catalyses fluoride(in) = fluoride(out). Na(+) is not transported, but it plays an essential structural role and its presence is essential for fluoride channel function. Functionally, fluoride-specific ion channel. Important for reducing fluoride concentration in the cell, thus reducing its toxicity. This is Fluoride-specific ion channel FluC from Xanthomonas euvesicatoria pv. vesicatoria (strain 85-10) (Xanthomonas campestris pv. vesicatoria).